The primary structure comprises 475 residues: Eukaryotic translation initiation factor 3 subunit L (475 aa).

One can recognise a PCI domain in the interval 257–451; it reads DAIRMFSHIL…DLDYAMQGDL (195 aa).

The protein belongs to the eIF-3 subunit L family. In terms of assembly, component of the eukaryotic translation initiation factor 3 (eIF-3) complex.

It localises to the cytoplasm. Its function is as follows. Component of the eukaryotic translation initiation factor 3 (eIF-3) complex, which is involved in protein synthesis of a specialized repertoire of mRNAs and, together with other initiation factors, stimulates binding of mRNA and methionyl-tRNAi to the 40S ribosome. The eIF-3 complex specifically targets and initiates translation of a subset of mRNAs involved in cell proliferation. The sequence is that of Eukaryotic translation initiation factor 3 subunit L from Botryotinia fuckeliana (strain B05.10) (Noble rot fungus).